A 470-amino-acid chain; its full sequence is MEPVYSWGNTHLDFVDPEIYDLIEKEKHRQCRGIELIAAENFTSVAVMEALGSCLTNKYSEGMPGNRYYGGTEFIDEIESLCRSRSLEAFHCNPEKWGVNVQPYSGSPANFAAYTALLQPHDRIMGLDLPSGGHITHGYYSSGGKNISATSIYFENLPYKVDSKTGYIDYDKLEEKAMDFRPKLIICGGTSYPREWDYARFRAVADKVGAFLLCDMAHNSALVAAQEAADPFEYCDVVTTSTHKSLRGPRAGMIFYRKGPKPAKKGQPEGEVYDFDAKINSAVFPALQSGPHNNKIGALAVALKQVMAPSFKVYAKQVKANAACLASYLINKGYTLVTDGTDNHLILWDLRPLGLTGNKVEKVCELCYITLNRNAVFGDTSFLAPGGVRIGTPAMTSRGLVEKDFEKIGEFLHRAVTITLDIQEQYGKVMKDFNKGLVNNKEIDEIKADVEEFTYDFDMPGFFISESRND.

Lys244 is modified (N6-(pyridoxal phosphate)lysine).

Belongs to the SHMT family. Homotetramer. Pyridoxal 5'-phosphate is required as a cofactor.

The protein resides in the cytoplasm. The catalysed reaction is (6R)-5,10-methylene-5,6,7,8-tetrahydrofolate + glycine + H2O = (6S)-5,6,7,8-tetrahydrofolate + L-serine. It functions in the pathway one-carbon metabolism; tetrahydrofolate interconversion. Functionally, catalyzes the interconversion of serine and glycine. The protein is Serine hydroxymethyltransferase 5 (SHM5) of Arabidopsis thaliana (Mouse-ear cress).